The chain runs to 473 residues: Photosystem II CP43 reaction center protein (473 aa).

A propeptide spanning residues 1 to 14 (MKILYSQRRFYPVE) is cleaved from the precursor. At Thr-15 the chain carries N-acetylthreonine. Thr-15 is subject to Phosphothreonine. Helical transmembrane passes span 69–93 (LFEV…PHLA), 134–155 (LIGP…KDKN), 178–200 (KALY…RKIT), 255–275 (KPFA…LSYS), and 291–312 (WFNN…ASQA). Glu-367 lines the [CaMn4O5] cluster pocket. The chain crosses the membrane as a helical span at residues 447 to 471 (RARAAAAGFEKGIDRDFEPVLSMTP).

Belongs to the PsbB/PsbC family. PsbC subfamily. As to quaternary structure, PSII is composed of 1 copy each of membrane proteins PsbA, PsbB, PsbC, PsbD, PsbE, PsbF, PsbH, PsbI, PsbJ, PsbK, PsbL, PsbM, PsbT, PsbX, PsbY, PsbZ, Psb30/Ycf12, at least 3 peripheral proteins of the oxygen-evolving complex and a large number of cofactors. It forms dimeric complexes. Binds multiple chlorophylls and provides some of the ligands for the Ca-4Mn-5O cluster of the oxygen-evolving complex. It may also provide a ligand for a Cl- that is required for oxygen evolution. PSII binds additional chlorophylls, carotenoids and specific lipids. serves as cofactor. Phosphorylated on threonine residue(s).

It localises to the plastid. Its subcellular location is the chloroplast thylakoid membrane. Functionally, one of the components of the core complex of photosystem II (PSII). It binds chlorophyll and helps catalyze the primary light-induced photochemical processes of PSII. PSII is a light-driven water:plastoquinone oxidoreductase, using light energy to abstract electrons from H(2)O, generating O(2) and a proton gradient subsequently used for ATP formation. The sequence is that of Photosystem II CP43 reaction center protein from Marchantia polymorpha (Common liverwort).